We begin with the raw amino-acid sequence, 301 residues long: Phosphate butyryltransferase (301 aa).

This sequence belongs to the phosphate acetyltransferase and butyryltransferase family.

It carries out the reaction butanoyl-CoA + phosphate = butanoyl phosphate + CoA. It participates in lipid metabolism; butanoate metabolism. Catalyzes the conversion of butyryl-CoA through butyryl phosphate to butyrate. This Clostridium acetobutylicum (strain ATCC 824 / DSM 792 / JCM 1419 / IAM 19013 / LMG 5710 / NBRC 13948 / NRRL B-527 / VKM B-1787 / 2291 / W) protein is Phosphate butyryltransferase (ptb).